Reading from the N-terminus, the 248-residue chain is MEDNCIKIAQVSDLHLTSENCETSRGRYSNAMNVFSAISLSGQHDMIFITGDISDDYTENSYKQLLEMLKKLTCRVFVIPGNHDDVNLMNKIIPEKYLFSPETVTSFNTFDFLFVNTVVNGEIHGLLTDQDLSLFQNHLENSGNKKKCIIMHHNPIPLNRKIYDKYMLLNYQDFLRIICLYDNVKLVIFGHVHNDYTISYRQTLFSSAPATCYQIKKFESDIIIEEKYGYKNYFLFEEFIETNCIWIK.

D13, H15, D52, N82, H152, H191, and H193 together coordinate Fe cation. Residues H15, D52, and 82-83 (NH) contribute to the AMP site. H193 provides a ligand contact to AMP.

Belongs to the cyclic nucleotide phosphodiesterase class-III family. The cofactor is Fe(2+).

The sequence is that of Probable cyclic nucleotide phosphodiesterase CBUA0032 from Coxiella burnetii (strain RSA 493 / Nine Mile phase I).